The sequence spans 358 residues: CRS2-associated factor 2, mitochondrial (358 aa).

The transit peptide at 1–28 directs the protein to the mitochondrion; that stretch reads MLSIRRSLTLAKEPKDLFLFLCNLRARC. A disordered region spans residues 35–64; that stretch reads DPPFSPLSKPTKPPKEKKKQKTKKQDQSSE. 2 consecutive CRM domains span residues 141–239 and 261–357; these read ETLT…SRPI and DGLE…ELVT.

As to quaternary structure, part of large ribonucleo-protein complexes that include group IIB introns.

It localises to the mitochondrion. May be involved in the splicing of group IIB introns in mitochondria. The protein is CRS2-associated factor 2, mitochondrial of Arabidopsis thaliana (Mouse-ear cress).